The following is a 153-amino-acid chain: 6,7-dimethyl-8-ribityllumazine synthase (153 aa).

5-amino-6-(D-ribitylamino)uracil contacts are provided by residues Phe21, 55 to 57 (AFE), and 79 to 81 (CVI). 84 to 85 (AT) lines the (2S)-2-hydroxy-3-oxobutyl phosphate pocket. His87 (proton donor) is an active-site residue. Residue Phe112 coordinates 5-amino-6-(D-ribitylamino)uracil. Position 126 (Arg126) interacts with (2S)-2-hydroxy-3-oxobutyl phosphate.

The protein belongs to the DMRL synthase family. In terms of assembly, forms an icosahedral capsid composed of 60 subunits, arranged as a dodecamer of pentamers.

The catalysed reaction is (2S)-2-hydroxy-3-oxobutyl phosphate + 5-amino-6-(D-ribitylamino)uracil = 6,7-dimethyl-8-(1-D-ribityl)lumazine + phosphate + 2 H2O + H(+). It functions in the pathway cofactor biosynthesis; riboflavin biosynthesis; riboflavin from 2-hydroxy-3-oxobutyl phosphate and 5-amino-6-(D-ribitylamino)uracil: step 1/2. Its function is as follows. Catalyzes the formation of 6,7-dimethyl-8-ribityllumazine by condensation of 5-amino-6-(D-ribitylamino)uracil with 3,4-dihydroxy-2-butanone 4-phosphate. This is the penultimate step in the biosynthesis of riboflavin. The protein is 6,7-dimethyl-8-ribityllumazine synthase of Staphylococcus epidermidis (strain ATCC 35984 / DSM 28319 / BCRC 17069 / CCUG 31568 / BM 3577 / RP62A).